The primary structure comprises 344 residues: Serine/arginine-rich splicing factor 6 (344 aa).

The region spanning 1–72 is the RRM 1 domain; that stretch reads MPRVYIGRLS…ERVIVEHARG (72 aa). Ser45, Ser81, and Ser84 each carry phosphoserine. The tract at residues 75–103 is disordered; the sequence is RDRDGYSYGSRSGGGGYSSRRTSGRDKYG. Residues 110 to 183 enclose the RRM 2 domain; sequence YRLIVENLSS…RNIRLIEDKP (74 aa). Lys165 is modified (N6-acetyllysine). The segment at 176-344 is disordered; it reads IRLIEDKPRT…RSRSRSSSRD (169 aa). Residue Lys182 forms a Glycyl lysine isopeptide (Lys-Gly) (interchain with G-Cter in SUMO2) linkage. Residues 185-250 are compositionally biased toward basic residues; that stretch reads TSHRRSYSGS…RKSRSKSKSK (66 aa). 2 stretches are compositionally biased toward basic and acidic residues: residues 264–273 and 280–291; these read RSKDEYEKSR and SPKENGKGDIKS. Residues Ser297 and Ser299 each carry the phosphoserine modification. Ser303 is subject to Phosphoserine; by DYRK1A. 2 positions are modified to phosphoserine: Ser314 and Ser316. Basic residues predominate over residues 322-344; the sequence is ATSRSRSRSRSKSRSRSRSSSRD.

Belongs to the splicing factor SR family. As to quaternary structure, binds SREK1/SFRS12. Interacts with DYRK1A. In terms of processing, extensively phosphorylated on serine residues in the RS domain. Phosphorylated by DYRK1A, probably in the RS domain. Phosphorylation by DYRK1A modulates alternative splice site selection and inhibits the expression of MAPT/Tau exon 10.

It localises to the nucleus. Its subcellular location is the nucleus speckle. In terms of biological role, plays a role in constitutive splicing and modulates the selection of alternative splice sites. Plays a role in the alternative splicing of MAPT/Tau exon 10. Binds to alternative exons of TNC pre-mRNA and promotes the expression of alternatively spliced TNC. Plays a role in wound healing and in the regulation of keratinocyte differentiation and proliferation via its role in alternative splicing. In Homo sapiens (Human), this protein is Serine/arginine-rich splicing factor 6 (SRSF6).